A 397-amino-acid chain; its full sequence is MTLPTDPAANLAALIRCASVTPAEGGALGALETMLKPLGFLVDRPVFSEDGTPDIENLYARRSGNGPHLMFAGHTDVVPVGDEAAWTHPPFAAEIANGEMYGRGAVDMKGGIACFVAAIARHVENNGGPKGSVSLLITGDEEGPAINGTVKLLEWAASRGEKWDASIVGEPTNPDTLGDMIKIGRRGSLSGSITVNGRQGHAAYPQLADNPVRGLMGLVDALLHPVFDKGTKDFQPTNLEVTSIDVGNPATNVIPAKATATFNIRFNDTWTAETVQAEIHNRLDQAAKRKKYRPGKKTPVDYDLVWRDRPSHVFLTRDDKLVDTLAGSIKAAVGKEPTLSTSGGTSDARFIKDYCPVVEFGLVGKTMHMVDERVALADLETLTRIYQRFIEDWFGQG.

Histidine 74 is a Zn(2+) binding site. Aspartate 76 is an active-site residue. Aspartate 107 contacts Zn(2+). The Proton acceptor role is filled by glutamate 141. Residues glutamate 142, glutamate 170, and histidine 368 each coordinate Zn(2+).

The protein belongs to the peptidase M20A family. DapE subfamily. Homodimer. It depends on Zn(2+) as a cofactor. Requires Co(2+) as cofactor.

It carries out the reaction N-succinyl-(2S,6S)-2,6-diaminopimelate + H2O = (2S,6S)-2,6-diaminopimelate + succinate. It participates in amino-acid biosynthesis; L-lysine biosynthesis via DAP pathway; LL-2,6-diaminopimelate from (S)-tetrahydrodipicolinate (succinylase route): step 3/3. Functionally, catalyzes the hydrolysis of N-succinyl-L,L-diaminopimelic acid (SDAP), forming succinate and LL-2,6-diaminopimelate (DAP), an intermediate involved in the bacterial biosynthesis of lysine and meso-diaminopimelic acid, an essential component of bacterial cell walls. The chain is Succinyl-diaminopimelate desuccinylase from Mesorhizobium japonicum (strain LMG 29417 / CECT 9101 / MAFF 303099) (Mesorhizobium loti (strain MAFF 303099)).